A 73-amino-acid chain; its full sequence is Disintegrin mojastin-2 (73 aa).

Positions 1–73 constitute a Disintegrin domain; that stretch reads EAGEECDCGS…ADCPRNGLYG (73 aa). Cystine bridges form between Cys-6–Cys-21, Cys-8–Cys-16, Cys-15–Cys-38, Cys-29–Cys-35, Cys-34–Cys-59, and Cys-47–Cys-66. The Cell attachment site signature appears at 51–53; that stretch reads RGD.

The protein belongs to the venom metalloproteinase (M12B) family. P-II subfamily. P-IIa sub-subfamily. In terms of assembly, monomer (disintegrin). Expressed by the venom gland.

It is found in the secreted. In terms of biological role, inhibits the three processes involved in platelet function (adhesion, activation and aggregation). It inhibits platelet adhesion to fibronectin with an IC(50) of 58.6 nM. It inhibits ATP release from platelet induced by ADP with an IC(50) of 19.5 nM on platelet-rich plasma, probably by binding to ADP receptors (P2RY1 and P2RY12). Finally, it inhibits ADP-induced platelet aggregation with IC(50) of 44.7 nM on platelet-rich plasma and 19.3 nM on whole blood, probably by binding to alpha-IIb/beta-3 (ITGA2B/ITGB3). Its function is as follows. Inhibits ADP-induced platelet aggregation (IC(50) = 13.8 nM) probably by binding to alpha-IIb/beta-3 (ITGA2B/ITGB3) located on the platelet surface. The protein is Disintegrin mojastin-2 of Crotalus scutulatus scutulatus (Mojave rattlesnake).